A 542-amino-acid polypeptide reads, in one-letter code: Protein MPA43 (542 aa).

The chain is Protein MPA43 (MPA43) from Saccharomyces cerevisiae (strain ATCC 204508 / S288c) (Baker's yeast).